The following is a 110-amino-acid chain: uncharacterized protein (110 aa).

3 consecutive transmembrane segments (helical) span residues V32 to P52, Y57 to I77, and F90 to I110.

It localises to the membrane. May play a role in proper chromosome segregation. Suppresses the high-frequency loss of mini-chromosomes when overexpressed, and this suppression is completely dependent on silencing protein SIR4. This is an uncharacterized protein from Saccharomyces cerevisiae (strain ATCC 204508 / S288c) (Baker's yeast).